The chain runs to 955 residues: MDIEDKTSKMHCMKGKHVVIICGVVIAVGLILGLGLGLGLDTKACNPPEVNGQVSTKSPISNTPDVTSPSGSSVFCSAKNDENGPWTHFRLPNYVHPVHYDLHLTPEMEAEVYTGMVNISIRLEEQTTKHLWLHLRETKITEMPQLWTSSGQVIEIKRCFGYEPQEYVVIEAEEDLRPSNYFLSMRFKGYLNGSLVGFYSTTYGENGKIKYIAATDHEPTDARKSFPCFDEPNKKATYTISITHEHDYEAISNMPVEKTISLDNKWTKTIFKKSVPMSTYLVAWAVHQFKYEERISSRGIPLRIYAQPQQINTAIYAANVTKVVFDYFENYFNMNYSLPKLDKIAIPDFGTGAMENWGLITYRETNLLYDSQESAASNKQRVAAVIAHELVHQWFGNIVTMDWWDDLWLNEGFASFFEFMGVNAKEEKWQMLDQILISDLLPVLKEDSLVSSHPITVNVSSPDEITSVFDGISYSKGASILRMLEDWISPECFRAGCEKYLKEHYFKNAKTDDFWKAMEEVSGKPVKEVMDTWTRQMGYPVLKVDLNSTVTQQRFLLDPKADPSKPSSQFSYKWNIPVKWKEGNTSNIIFYNKSELAGITITRPSDLPLNSFLKVNKDHVGFYRVNYEPQVWRALTDIMMKDHQNFNLADRAGFIDDAFALARAGLLKYADALNLTRYLQNEAEYIPWQRAVVAISYIRNMFEDDKALYPKFQRYFGSLVKPIASELKWEXDEDHIKSLLRTTVLEFACKMEDPEALGNASLLFKKWMSGISLDVNLRLLVYRFGMQNSGDEQAWNYMFQKYRTATLAQEKEKLLYGLASVKNITLLNRFLSCIKNTSLIRSQDVFTVLGYISLNSYGKTMAWDWVRLNWEYLVKRYTLNDRNLGRLISRLSGTFNTELQLWQMENFFERYPDAGAGEASRKQALETTKSNIEWLKQYRDDVATWLENSEHSNFA.

Residues 1-17 are Cytoplasmic-facing; the sequence is MDIEDKTSKMHCMKGKH. The helical; Signal-anchor for type II membrane protein transmembrane segment at 18–38 threads the bilayer; sequence VVIICGVVIAVGLILGLGLGL. Residues 39–955 lie on the Extracellular side of the membrane; that stretch reads GLDTKACNPP…LENSEHSNFA (917 aa). Residues asparagine 118 and asparagine 192 are each glycosylated (N-linked (GlcNAc...) asparagine). Position 218 (glutamate 218) interacts with substrate. N-linked (GlcNAc...) asparagine glycans are attached at residues asparagine 319 and asparagine 335. 352 to 356 lines the substrate pocket; sequence GAMEN. Residue histidine 388 participates in Zn(2+) binding. Glutamate 389 serves as the catalytic Proton acceptor. Zn(2+)-binding residues include histidine 392 and glutamate 411. 8 N-linked (GlcNAc...) asparagine glycosylation sites follow: asparagine 458, asparagine 547, asparagine 584, asparagine 592, asparagine 674, asparagine 759, asparagine 823, and asparagine 836. Arginine 882 serves as a coordination point for substrate.

It belongs to the peptidase M1 family. In terms of assembly, homodimer; disulfide-linked. It depends on Zn(2+) as a cofactor. In terms of processing, N-glycosylated. Glycosylation counts for an increased mass of about 32% of the protein mass (about 48 kDa).

The protein localises to the cell membrane. The enzyme catalyses Release of N-terminal glutamate (and to a lesser extent aspartate) from a peptide.. Its activity is regulated as follows. Substrate specificity is modulated by calcium which enhances the enzymatic activity for cleavage of acidic residues while reducing its activity with neutral and basic residues. Hydrolytic activity is inhibited by the aminopeptidase inhibitor (Leu and acidic inhibitor) amastatin, but not by bestatin (aminopeptidase inhibitor Leu inhibitor), leupeptin, pepstatin A and PMSF. Its hydrolytic activity is also strongly reduced by zinc ions, with a complete inhibition at 0.5 mM, and moderately inhibited by cobalt and copper ions. Functionally, venom protein that cleaves N-terminal acidic residues from peptides with high potency in presence of calcium. It may have several roles in venom including alteration of blood pressure by cleaving circulating angiotensin-2, general degradation of host tissue, increase of permeability to other venom components, and/or processing of other toxins in the venom. This chain is Glutamyl aminopeptidase, found in Bitis rhinoceros (West African gaboon viper).